Here is a 250-residue protein sequence, read N- to C-terminus: MTNQKQTTHFGFKSVDWNEKEKKVAEVFHSVAKNYDRMNDLMSLGIHHLWKRYTIELSHVRPGQSVLDLAGGSGDLTRLLSQKVGDSGQVILADINAAMLHVGRDRLLDEGLFKNIRYVQGNAQCLPFADNSFHCITMGFGLRNVTDKDEALQSMYRVCKPGGKLMVLEFSTPVFPGLKPVYDWYSFNILPKIGKFVANDEASYQYLAESIRMHPDQETLKAMIERVGFEDCHYHNLSGGIVALHIAYKY.

S-adenosyl-L-methionine-binding positions include S73, D94, and 122–123; that span reads NA.

Belongs to the class I-like SAM-binding methyltransferase superfamily. MenG/UbiE family.

It carries out the reaction a 2-demethylmenaquinol + S-adenosyl-L-methionine = a menaquinol + S-adenosyl-L-homocysteine + H(+). It catalyses the reaction a 2-methoxy-6-(all-trans-polyprenyl)benzene-1,4-diol + S-adenosyl-L-methionine = a 5-methoxy-2-methyl-3-(all-trans-polyprenyl)benzene-1,4-diol + S-adenosyl-L-homocysteine + H(+). It participates in quinol/quinone metabolism; menaquinone biosynthesis; menaquinol from 1,4-dihydroxy-2-naphthoate: step 2/2. Its pathway is cofactor biosynthesis; ubiquinone biosynthesis. In terms of biological role, methyltransferase required for the conversion of demethylmenaquinol (DMKH2) to menaquinol (MKH2) and the conversion of 2-polyprenyl-6-methoxy-1,4-benzoquinol (DDMQH2) to 2-polyprenyl-3-methyl-6-methoxy-1,4-benzoquinol (DMQH2). The polypeptide is Ubiquinone/menaquinone biosynthesis C-methyltransferase UbiE (Legionella pneumophila (strain Lens)).